The sequence spans 164 residues: 6,7-dimethyl-8-ribityllumazine synthase (164 aa).

Residues Tyr-30, 61-63 (ALE), and 85-87 (CVI) contribute to the 5-amino-6-(D-ribitylamino)uracil site. 90–91 (ET) provides a ligand contact to (2S)-2-hydroxy-3-oxobutyl phosphate. His-93 functions as the Proton donor in the catalytic mechanism. Residue Asn-118 participates in 5-amino-6-(D-ribitylamino)uracil binding. Arg-132 provides a ligand contact to (2S)-2-hydroxy-3-oxobutyl phosphate.

The protein belongs to the DMRL synthase family.

It carries out the reaction (2S)-2-hydroxy-3-oxobutyl phosphate + 5-amino-6-(D-ribitylamino)uracil = 6,7-dimethyl-8-(1-D-ribityl)lumazine + phosphate + 2 H2O + H(+). It participates in cofactor biosynthesis; riboflavin biosynthesis; riboflavin from 2-hydroxy-3-oxobutyl phosphate and 5-amino-6-(D-ribitylamino)uracil: step 1/2. Its function is as follows. Catalyzes the formation of 6,7-dimethyl-8-ribityllumazine by condensation of 5-amino-6-(D-ribitylamino)uracil with 3,4-dihydroxy-2-butanone 4-phosphate. This is the penultimate step in the biosynthesis of riboflavin. The sequence is that of 6,7-dimethyl-8-ribityllumazine synthase from Methylobacterium radiotolerans (strain ATCC 27329 / DSM 1819 / JCM 2831 / NBRC 15690 / NCIMB 10815 / 0-1).